Here is a 269-residue protein sequence, read N- to C-terminus: Phosphonoacetaldehyde hydrolase (269 aa).

The active-site Nucleophile is the Asp-10. Mg(2+) is bound by residues Asp-10 and Ala-12. Catalysis depends on Lys-52, which acts as the Schiff-base intermediate with substrate. Asp-186 serves as a coordination point for Mg(2+).

It belongs to the HAD-like hydrolase superfamily. PhnX family. As to quaternary structure, homodimer. Requires Mg(2+) as cofactor.

It catalyses the reaction phosphonoacetaldehyde + H2O = acetaldehyde + phosphate + H(+). In terms of biological role, involved in phosphonate degradation. This chain is Phosphonoacetaldehyde hydrolase, found in Salmonella typhi.